A 567-amino-acid polypeptide reads, in one-letter code: Glutamine--tRNA ligase (567 aa).

The 'HIGH' region signature appears at 47–57; the sequence is PEPNGYLHIGH. ATP is bound by residues 48 to 50 and 54 to 60; these read EPN and HIGHAKS. 2 residues coordinate L-glutamine: Asp-80 and Tyr-225. Residues Thr-244 and 274–275 each bind ATP; that span reads RL. Residues 281-285 carry the 'KMSKS' region motif; the sequence is ITSKR.

It belongs to the class-I aminoacyl-tRNA synthetase family. As to quaternary structure, monomer.

It localises to the cytoplasm. It catalyses the reaction tRNA(Gln) + L-glutamine + ATP = L-glutaminyl-tRNA(Gln) + AMP + diphosphate. The protein is Glutamine--tRNA ligase of Pseudomonas putida (strain ATCC 47054 / DSM 6125 / CFBP 8728 / NCIMB 11950 / KT2440).